The sequence spans 351 residues: Glycerol-3-phosphate dehydrogenase [NAD(P)+] (351 aa).

NADPH-binding residues include Ser-18, Trp-19, Arg-38, and Lys-122. Sn-glycerol 3-phosphate-binding residues include Lys-122, Gly-153, and Ser-155. Ala-157 serves as a coordination point for NADPH. Sn-glycerol 3-phosphate-binding residues include Lys-208, Asp-261, Ser-271, Arg-272, and Asn-273. The active-site Proton acceptor is the Lys-208. Position 272 (Arg-272) interacts with NADPH. Glu-297 serves as a coordination point for NADPH.

It belongs to the NAD-dependent glycerol-3-phosphate dehydrogenase family.

It is found in the cytoplasm. It carries out the reaction sn-glycerol 3-phosphate + NAD(+) = dihydroxyacetone phosphate + NADH + H(+). The enzyme catalyses sn-glycerol 3-phosphate + NADP(+) = dihydroxyacetone phosphate + NADPH + H(+). Its pathway is membrane lipid metabolism; glycerophospholipid metabolism. Catalyzes the reduction of the glycolytic intermediate dihydroxyacetone phosphate (DHAP) to sn-glycerol 3-phosphate (G3P), the key precursor for phospholipid synthesis. This Bordetella pertussis (strain Tohama I / ATCC BAA-589 / NCTC 13251) protein is Glycerol-3-phosphate dehydrogenase [NAD(P)+].